The primary structure comprises 457 residues: TnpB-like protein ORF457 (457 aa).

The tract at residues 1 to 22 (MPPSSGQLLGDEEREPTSTPAI) is disordered.

It in the N-terminal section; belongs to the transposase 2 family. The protein in the C-terminal section; belongs to the transposase 35 family.

The protein is TnpB-like protein ORF457 of Acidianus two-tailed virus (ATV).